A 224-amino-acid polypeptide reads, in one-letter code: Claudin-19 (224 aa).

Topologically, residues 1 to 7 are cytoplasmic; it reads MANSGLQ. Residues 8–28 form a helical membrane-spanning segment; the sequence is LLGYFLALGGWVGIIASTALP. The Extracellular segment spans residues 29–81; that stretch reads QWKQSSYAGDAIITAVGLYEGLWMSCASQSTGQVQCKLYDSLLALDGHIQSAR. C54 and C64 are disulfide-bonded. The helical transmembrane segment at 82-102 threads the bilayer; the sequence is ALMVVAVLLGFVAMVLSVVGM. Residues 103 to 117 lie on the Cytoplasmic side of the membrane; the sequence is KCTRVGDSNPTAKGR. The chain crosses the membrane as a helical span at residues 118-138; that stretch reads VAISGGALFLLAGLCTLTAVS. Residues 139-160 are Extracellular-facing; sequence WYATLVTQEFFNPSTPVNARYE. Residues 161–181 form a helical membrane-spanning segment; that stretch reads FGPALFVGWASAGLAILGGSF. At 182-224 the chain is on the cytoplasmic side; the sequence is LCCTCPEPERANSIPQPYRSGPSTAAREPVVKLSTSVKGPLGV.

It belongs to the claudin family. In terms of assembly, can form homo- and heteropolymeric tight junction strands. Interacts with other claudins including CLDN3, CLDN10, CLDN16 and CLDN18 with highest affinity for CLDN16. Interacts (via PDZ-binding motif TRV) with TJP1 (via PDZ domain).

It is found in the cell junction. The protein localises to the tight junction. It localises to the cell membrane. The catalysed reaction is Mg(2+)(in) = Mg(2+)(out). The enzyme catalyses Ca(2+)(in) = Ca(2+)(out). It carries out the reaction Na(+)(in) = Na(+)(out). It catalyses the reaction K(+)(in) = K(+)(out). The catalysed reaction is Rb(+)(in) = Rb(+)(out). The enzyme catalyses Cs(+)(in) = Cs(+)(out). It carries out the reaction Li(+)(in) = Li(+)(out). In terms of biological role, forms paracellular channels: coassembles with CLDN16 into tight junction strands with cation-selective channels through the strands, conveying epithelial permeability in a process known as paracellular tight junction permeability. Involved in the maintenance of ion gradients along the nephron. In the thick ascending limb (TAL) of Henle's loop, facilitates sodium paracellular permeability from the interstitial compartment to the lumen, contributing to the lumen-positive transepithelial potential that drives paracellular magnesium and calcium reabsorption. Forms paracellular barriers on its own. In the peripheral nervous system, represents a major constituent of the tight junctions in Schwann cells and contributes to electrical sealing. During retinal neurogenesis, may regulate the barrier properties of tight junctions in retinal pigment epithelium, required for proper retinal tissue differentiation and vision. The chain is Claudin-19 from Rattus norvegicus (Rat).